Consider the following 493-residue polypeptide: Cobyric acid synthase (493 aa).

One can recognise a GATase cobBQ-type domain in the interval 260 to 427; the sequence is RLSVAAIRLP…RHGYLQDDPA (168 aa). Residue His-419 is part of the active site.

It belongs to the CobB/CobQ family. CobQ subfamily.

It functions in the pathway cofactor biosynthesis; adenosylcobalamin biosynthesis. Its function is as follows. Catalyzes amidations at positions B, D, E, and G on adenosylcobyrinic A,C-diamide. NH(2) groups are provided by glutamine, and one molecule of ATP is hydrogenolyzed for each amidation. This Corynebacterium efficiens (strain DSM 44549 / YS-314 / AJ 12310 / JCM 11189 / NBRC 100395) protein is Cobyric acid synthase.